The sequence spans 497 residues: Xylooligosaccharide oxidase (497 aa).

An N-terminal signal peptide occupies residues 1 to 16 (MHLLPLTVSATAVVSA). An intrachain disulfide couples C30 to C79. N-linked (GlcNAc...) asparagine glycans are attached at residues N42 and N117. The FAD-binding PCMH-type domain occupies 57 to 230 (LPYTPAAIAK…ASFRFKTFAA (174 aa)). Residues 94 to 155 (HSYASFGLGG…GKRAFSHGTC (62 aa)) constitute a cross-link (6-(S-cysteinyl)-8alpha-(pros-histidyl)-FAD (His-Cys)). Position 154 (T154) interacts with substrate. N-linked (GlcNAc...) asparagine glycans are attached at residues N192, N233, and N245. R272 provides a ligand contact to substrate. N289 and N307 each carry an N-linked (GlcNAc...) asparagine glycan. Substrate is bound by residues E412 and Y451.

It belongs to the oxygen-dependent FAD-linked oxidoreductase family. The cofactor is FAD. Post-translationally, the FAD cofactor is bound via a bicovalent 6-S-cysteinyl, 8alpha-N1-histidyl FAD linkage.

It is found in the secreted. It catalyses the reaction D-xylobiose + O2 = D-xylobiono-1,5-lactone + H2O2. The enzyme catalyses D-xylotriose + O2 = D-xylotriono-1,5-lactone + H2O2. It carries out the reaction D-xylotetraose + O2 = D-xylotetraono-1,5-lactone + H2O2. Its function is as follows. Catalyzes the selective oxidation of C1 hydroxyl moieties on mono-, oligo- and polysaccharides with concomitant reduction of molecular oxygen to hydrogen peroxide. This results in the formation of the corresponding lactones, which typically undergo spontaneous hydrolysis. Xylooligosaccharide oxidase is able to oxidize a variety of substrates including D-xylose, D-cellobiose, lactose and arabinose. The enzyme acts primarily on xylooligosaccharides, indicating that it prefers pentose-based oligosaccharides over hexose-based oligosaccharides. This Thermothelomyces thermophilus (strain ATCC 42464 / BCRC 31852 / DSM 1799) (Sporotrichum thermophile) protein is Xylooligosaccharide oxidase.